Here is a 338-residue protein sequence, read N- to C-terminus: Glycerol-3-phosphate dehydrogenase [NAD(P)+] (338 aa).

3 residues coordinate NADPH: S12, W13, and K110. K110, G141, and S143 together coordinate sn-glycerol 3-phosphate. NADPH is bound at residue A145. Residues K196, D249, S259, R260, and N261 each contribute to the sn-glycerol 3-phosphate site. The active-site Proton acceptor is the K196. R260 contributes to the NADPH binding site. Residues V284 and E286 each contribute to the NADPH site.

This sequence belongs to the NAD-dependent glycerol-3-phosphate dehydrogenase family.

The protein localises to the cytoplasm. It carries out the reaction sn-glycerol 3-phosphate + NAD(+) = dihydroxyacetone phosphate + NADH + H(+). The enzyme catalyses sn-glycerol 3-phosphate + NADP(+) = dihydroxyacetone phosphate + NADPH + H(+). It functions in the pathway membrane lipid metabolism; glycerophospholipid metabolism. Its function is as follows. Catalyzes the reduction of the glycolytic intermediate dihydroxyacetone phosphate (DHAP) to sn-glycerol 3-phosphate (G3P), the key precursor for phospholipid synthesis. The chain is Glycerol-3-phosphate dehydrogenase [NAD(P)+] from Lactiplantibacillus plantarum (strain ATCC BAA-793 / NCIMB 8826 / WCFS1) (Lactobacillus plantarum).